A 402-amino-acid polypeptide reads, in one-letter code: Mitochondrial inner membrane protein OXA1 (402 aa).

The N-terminal 42 residues, 1–42 (MFKLTSRLVTSRFAASSRLATARTIVLPRPHPSWISFQAKRF), are a transit peptide targeting the mitochondrion. Residues 43 to 118 (NSTGPNANDV…PSDIIQHVLE (76 aa)) lie on the Mitochondrial intermembrane side of the membrane. Residues 119–139 (AVHVYSGLPWWGTIAATTILI) traverse the membrane as a helical segment. The Mitochondrial matrix portion of the chain corresponds to 140–199 (RCLMFPLYVKSSDTVARNSHIKPELDALNNKLMSTTDLQQGQLVAMQRKKLLSSHGIKNR). The chain crosses the membrane as a helical span at residues 200–220 (WLAAPMLQIPIALGFFNALRH). The Mitochondrial intermembrane segment spans residues 221 to 239 (MANYPVDGFANQGVAWFTD). Residues 240 to 260 (LTQADPYLGLQVITAAVFISF) traverse the membrane as a helical segment. At 261-275 (TRLGGETGAQQFSSP) the chain is on the mitochondrial matrix side. Residues 276–292 (MKRLFTILPIISIPATM) form a helical membrane-spanning segment. Topologically, residues 293–297 (NLSSA) are mitochondrial intermembrane. The chain crosses the membrane as a helical span at residues 298–316 (VVLYFAFNGAFSVLQTMIL). At 317–402 (RNKWVRSKLK…HKSNFINNKK (86 aa)) the chain is on the mitochondrial matrix side. The span at 366–385 (RQLMQDNEKKLQESFKEKRQ) shows a compositional bias: basic and acidic residues. The tract at residues 366–386 (RQLMQDNEKKLQESFKEKRQN) is disordered.

The protein belongs to the OXA1/ALB3/YidC family. In terms of assembly, interacts with the large ribosome subunit of mitochondrial ribosome. Interacts directly with MRP20. Interacts with OXA1.

It localises to the mitochondrion inner membrane. Functionally, mitochondrial inner membrane insertase that mediates the insertion of both mitochondrion-encoded precursors and nuclear-encoded proteins from the matrix into the inner membrane. Links mitoribosomes with the inner membrane. Forms pores capable of accommodating translocating protein segments. Essential for the activity and assembly of cytochrome c oxidase. Plays a central role in the translocation and export of the N-terminal part of the COX2 protein into the mitochondrial intermembrane space. The protein is Mitochondrial inner membrane protein OXA1 of Saccharomyces cerevisiae (strain ATCC 204508 / S288c) (Baker's yeast).